Reading from the N-terminus, the 572-residue chain is Periplasmic pectate lyase (572 aa).

A signal peptide spans 1–23; it reads MKKRALLLSMSVLAMLYIPAGQA.

This sequence belongs to the polysaccharide lyase 2 family.

The protein resides in the periplasm. The catalysed reaction is Eliminative cleavage of (1-&gt;4)-alpha-D-galacturonan to give oligosaccharides with 4-deoxy-alpha-D-galact-4-enuronosyl groups at their non-reducing ends.. The protein operates within glycan metabolism; pectin degradation; 2-dehydro-3-deoxy-D-gluconate from pectin: step 2/5. The chain is Periplasmic pectate lyase (pelY) from Yersinia pseudotuberculosis serotype I (strain IP32953).